The sequence spans 209 residues: Uracil phosphoribosyltransferase (209 aa).

Residues arginine 77, arginine 102, and 129 to 137 each bind 5-phospho-alpha-D-ribose 1-diphosphate; that span reads DPMLATGSS. Residues isoleucine 192 and 197-199 each bind uracil; that span reads GDA. Aspartate 198 contacts 5-phospho-alpha-D-ribose 1-diphosphate.

The protein belongs to the UPRTase family. Mg(2+) is required as a cofactor.

The enzyme catalyses UMP + diphosphate = 5-phospho-alpha-D-ribose 1-diphosphate + uracil. The protein operates within pyrimidine metabolism; UMP biosynthesis via salvage pathway; UMP from uracil: step 1/1. With respect to regulation, allosterically activated by GTP. Its function is as follows. Catalyzes the conversion of uracil and 5-phospho-alpha-D-ribose 1-diphosphate (PRPP) to UMP and diphosphate. The chain is Uracil phosphoribosyltransferase from Metamycoplasma hominis (Mycoplasma hominis).